Consider the following 444-residue polypeptide: MTLFRTLAPMGLALALLLPAAVPAAAQQGPLRIQITEGVIEPLPFAVPDFVAENAGASELARDMARVIASDLSGTGLFREIPASAHISRVTSFEAPVAYGDWKAINAQALITGSVSASGDRVVVKFRLYDVFSDQPLGEGLQFAGSASGWRRMAHKVADVAYSRITGEGGYFDSRVVFVSESGPKNARAKRLAVMDYDGANVQYLTDSSSIVLAPRFSPTGDRILFTSYSTGFPRIYLMDVGSLATRGLAEQPGTMTFAPRFAPDGRTVAFSLEQGGNTDIYTLDTGSGTRRQLTNSPSIETAPSYSPDGSQIVFESDRSGGQQLYIMPAGGGEPRRISNGAGRYGTPVWSPRGDLIAFTKQHQGRFHIGVMRTDGSEERLLTASFLDEGPTWAPNGRVLMFTREGAGAGGQPALYSVDISGRNLKKVPLSVPASDPAWSPLLP.

Positions 1 to 26 are cleaved as a signal peptide; it reads MTLFRTLAPMGLALALLLPAAVPAAA. Positions 281–310 are enriched in polar residues; sequence IYTLDTGSGTRRQLTNSPSIETAPSYSPDG. The interval 281–311 is disordered; that stretch reads IYTLDTGSGTRRQLTNSPSIETAPSYSPDGS.

This sequence belongs to the TolB family. In terms of assembly, the Tol-Pal system is composed of five core proteins: the inner membrane proteins TolA, TolQ and TolR, the periplasmic protein TolB and the outer membrane protein Pal. They form a network linking the inner and outer membranes and the peptidoglycan layer.

It is found in the periplasm. Part of the Tol-Pal system, which plays a role in outer membrane invagination during cell division and is important for maintaining outer membrane integrity. This is Tol-Pal system protein TolB from Cereibacter sphaeroides (strain ATCC 17029 / ATH 2.4.9) (Rhodobacter sphaeroides).